Reading from the N-terminus, the 241-residue chain is Ribonuclease PH (241 aa).

Phosphate is bound by residues R87 and 125–127 (GTR).

Belongs to the RNase PH family. As to quaternary structure, homohexameric ring arranged as a trimer of dimers.

The enzyme catalyses tRNA(n+1) + phosphate = tRNA(n) + a ribonucleoside 5'-diphosphate. Its function is as follows. Phosphorolytic 3'-5' exoribonuclease that plays an important role in tRNA 3'-end maturation. Removes nucleotide residues following the 3'-CCA terminus of tRNAs; can also add nucleotides to the ends of RNA molecules by using nucleoside diphosphates as substrates, but this may not be physiologically important. Probably plays a role in initiation of 16S rRNA degradation (leading to ribosome degradation) during starvation. In Salinispora arenicola (strain CNS-205), this protein is Ribonuclease PH.